The primary structure comprises 1059 residues: Carbamoyl phosphate synthase large chain (1059 aa).

The interval 1 to 401 is carboxyphosphate synthetic domain; sequence MPKRKDIQKV…AMLKAVRSLE (401 aa). The ATP site is built by arginine 129, arginine 169, glycine 175, glycine 176, arginine 208, isoleucine 210, glutamate 215, glycine 241, valine 242, histidine 243, glutamine 284, and glutamate 298. The ATP-grasp 1 domain occupies 133–327; sequence KALMERLNEP…IAKMAAKIAV (195 aa). Glutamine 284, glutamate 298, and asparagine 300 together coordinate Mg(2+). Mn(2+)-binding residues include glutamine 284, glutamate 298, and asparagine 300. Residues 402–546 are oligomerization domain; it reads IGVTGLNDLT…YATYERENES (145 aa). A carbamoyl phosphate synthetic domain region spans residues 547–929; it reads VRSKKPSVIV…ALYKAFVASN (383 aa). The ATP-grasp 2 domain occupies 671–861; that stretch reads DQVIKTLALP…LAQLATRVML (191 aa). Arginine 707, serine 746, leucine 748, glutamate 752, glycine 777, valine 778, histidine 779, serine 780, glutamine 820, and glutamate 832 together coordinate ATP. Residues glutamine 820, glutamate 832, and asparagine 834 each contribute to the Mg(2+) site. Mn(2+) is bound by residues glutamine 820, glutamate 832, and asparagine 834. Residues 930-1059 form the MGS-like domain; sequence IKVPQYGNVL…SRSFTVNEMK (130 aa). The tract at residues 930–1059 is allosteric domain; sequence IKVPQYGNVL…SRSFTVNEMK (130 aa).

It belongs to the CarB family. In terms of assembly, composed of two chains; the small (or glutamine) chain promotes the hydrolysis of glutamine to ammonia, which is used by the large (or ammonia) chain to synthesize carbamoyl phosphate. Tetramer of heterodimers (alpha,beta)4. Mg(2+) serves as cofactor. It depends on Mn(2+) as a cofactor.

The catalysed reaction is hydrogencarbonate + L-glutamine + 2 ATP + H2O = carbamoyl phosphate + L-glutamate + 2 ADP + phosphate + 2 H(+). It carries out the reaction hydrogencarbonate + NH4(+) + 2 ATP = carbamoyl phosphate + 2 ADP + phosphate + 2 H(+). It participates in amino-acid biosynthesis; L-arginine biosynthesis; carbamoyl phosphate from bicarbonate: step 1/1. Its pathway is pyrimidine metabolism; UMP biosynthesis via de novo pathway; (S)-dihydroorotate from bicarbonate: step 1/3. Its function is as follows. Large subunit of the glutamine-dependent carbamoyl phosphate synthetase (CPSase). CPSase catalyzes the formation of carbamoyl phosphate from the ammonia moiety of glutamine, carbonate, and phosphate donated by ATP, constituting the first step of 2 biosynthetic pathways, one leading to arginine and/or urea and the other to pyrimidine nucleotides. The large subunit (synthetase) binds the substrates ammonia (free or transferred from glutamine from the small subunit), hydrogencarbonate and ATP and carries out an ATP-coupled ligase reaction, activating hydrogencarbonate by forming carboxy phosphate which reacts with ammonia to form carbamoyl phosphate. The chain is Carbamoyl phosphate synthase large chain from Leuconostoc citreum (strain KM20).